Consider the following 232-residue polypeptide: Phosphatidylserine decarboxylase proenzyme (232 aa).

The Schiff-base intermediate with substrate; via pyruvic acid role is filled by serine 190. Serine 190 carries the pyruvic acid (Ser); by autocatalysis modification.

The protein belongs to the phosphatidylserine decarboxylase family. PSD-A subfamily. As to quaternary structure, heterodimer of a large membrane-associated beta subunit and a small pyruvoyl-containing alpha subunit. It depends on pyruvate as a cofactor. Post-translationally, is synthesized initially as an inactive proenzyme. Formation of the active enzyme involves a self-maturation process in which the active site pyruvoyl group is generated from an internal serine residue via an autocatalytic post-translational modification. Two non-identical subunits are generated from the proenzyme in this reaction, and the pyruvate is formed at the N-terminus of the alpha chain, which is derived from the carboxyl end of the proenzyme. The post-translation cleavage follows an unusual pathway, termed non-hydrolytic serinolysis, in which the side chain hydroxyl group of the serine supplies its oxygen atom to form the C-terminus of the beta chain, while the remainder of the serine residue undergoes an oxidative deamination to produce ammonia and the pyruvoyl prosthetic group on the alpha chain.

It localises to the cell membrane. The catalysed reaction is a 1,2-diacyl-sn-glycero-3-phospho-L-serine + H(+) = a 1,2-diacyl-sn-glycero-3-phosphoethanolamine + CO2. The protein operates within phospholipid metabolism; phosphatidylethanolamine biosynthesis; phosphatidylethanolamine from CDP-diacylglycerol: step 2/2. Catalyzes the formation of phosphatidylethanolamine (PtdEtn) from phosphatidylserine (PtdSer). The chain is Phosphatidylserine decarboxylase proenzyme from Rhodopseudomonas palustris (strain BisA53).